Here is a 351-residue protein sequence, read N- to C-terminus: Keratocan (351 aa).

Positions 1–20 (MATPNCLILWVLLIADTVWT) are cleaved as a signal peptide. The 39-residue stretch at 34 to 72 (DWDVHDDFYCPRECFCPPSFPTALYCENRGLTEIPPIPS) folds into the LRRNT domain. 2 disulfide bridges follow: cysteine 43–cysteine 49 and cysteine 47–cysteine 59. 10 LRR repeats span residues 73 to 94 (RIWYLYLENNLIESIPEKPFEN), 97 to 118 (QLRWINLNKNKITNYGIEKGAL), 123 to 143 (KLLFLFLEDNELEEVPSPLPR), 144 to 165 (SLEQLQLARNKVSRIPQGTFSN), 168 to 181 (NLTLLDLQHNKLLD), 194 to 214 (NLMQLNMAKNALRNMPPRLPA), 215 to 236 (NTMQLFLDNNSIEGIPENYFNV), 239 to 259 (KVAFLRLNHNKLSDAGLPSRG), 264 to 283 (SILDLQLSYNQLTNFPRINA), and 284 to 305 (NLQHLHLDHNKIKNVNMSVICP). N-linked (GlcNAc...) (keratan sulfate) asparagine glycosylation occurs at asparagine 94. A glycan (N-linked (GlcNAc...) (keratan sulfate) asparagine) is linked at asparagine 168. Asparagine 223 carries an N-linked (GlcNAc...) asparagine glycan. N-linked (GlcNAc...) asparagine glycosylation is present at asparagine 299. Cysteine 304 and cysteine 342 are oxidised to a cystine.

It belongs to the small leucine-rich proteoglycan (SLRP) family. SLRP class II subfamily. Binds keratan sulfate chains. In terms of tissue distribution, selectively expressed in cornea of adult where it is detected in keratocytes but not in scleral cells. In embryo, first detected in periocular mesenchymal cells migrating toward developing cornea on 13.5 dpc; expression gradually restricted to corneal stromal cells on 14.5 to 18.5 dpc. Detected in scleral cells of 15.5 dpc but not in 18.5 dpc embryos.

Its subcellular location is the secreted. It localises to the extracellular space. The protein resides in the extracellular matrix. Functionally, may be important in developing and maintaining corneal transparency and for the structure of the stromal matrix. This is Keratocan (Kera) from Mus musculus (Mouse).